Here is a 293-residue protein sequence, read N- to C-terminus: Protease HtpX homolog (293 aa).

A run of 2 helical transmembrane segments spans residues 4–24 (VILF…TLRI) and 40–60 (ALLM…LLIS). His146 is a Zn(2+) binding site. Glu147 is a catalytic residue. His150 is a binding site for Zn(2+). Helical transmembrane passes span 161-181 (LIQG…GYFV) and 198-218 (VTVI…VAWF). Glu223 contributes to the Zn(2+) binding site.

It belongs to the peptidase M48B family. Zn(2+) is required as a cofactor.

It localises to the cell inner membrane. The polypeptide is Protease HtpX homolog (Bordetella avium (strain 197N)).